We begin with the raw amino-acid sequence, 735 residues long: Phosphoribosylformylglycinamidine synthase subunit PurL (735 aa).

H48 is a catalytic residue. ATP is bound by residues Y51 and K90. E92 lines the Mg(2+) pocket. Residues 93-96 and R115 each bind substrate; that span reads SHNH. The active-site Proton acceptor is the H94. Residue D116 coordinates Mg(2+). Q239 serves as a coordination point for substrate. D267 lines the Mg(2+) pocket. 311 to 313 contributes to the substrate binding site; it reads ESQ. ATP contacts are provided by D492 and G529. N530 is a Mg(2+) binding site. S532 is a binding site for substrate.

It belongs to the FGAMS family. As to quaternary structure, monomer. Part of the FGAM synthase complex composed of 1 PurL, 1 PurQ and 2 PurS subunits.

The protein resides in the cytoplasm. It catalyses the reaction N(2)-formyl-N(1)-(5-phospho-beta-D-ribosyl)glycinamide + L-glutamine + ATP + H2O = 2-formamido-N(1)-(5-O-phospho-beta-D-ribosyl)acetamidine + L-glutamate + ADP + phosphate + H(+). Its pathway is purine metabolism; IMP biosynthesis via de novo pathway; 5-amino-1-(5-phospho-D-ribosyl)imidazole from N(2)-formyl-N(1)-(5-phospho-D-ribosyl)glycinamide: step 1/2. In terms of biological role, part of the phosphoribosylformylglycinamidine synthase complex involved in the purines biosynthetic pathway. Catalyzes the ATP-dependent conversion of formylglycinamide ribonucleotide (FGAR) and glutamine to yield formylglycinamidine ribonucleotide (FGAM) and glutamate. The FGAM synthase complex is composed of three subunits. PurQ produces an ammonia molecule by converting glutamine to glutamate. PurL transfers the ammonia molecule to FGAR to form FGAM in an ATP-dependent manner. PurS interacts with PurQ and PurL and is thought to assist in the transfer of the ammonia molecule from PurQ to PurL. The protein is Phosphoribosylformylglycinamidine synthase subunit PurL of Bradyrhizobium sp. (strain BTAi1 / ATCC BAA-1182).